A 306-amino-acid chain; its full sequence is Methionyl-tRNA formyltransferase (306 aa).

108–111 is a binding site for (6S)-5,6,7,8-tetrahydrofolate; it reads SLLP.

The protein belongs to the Fmt family.

The enzyme catalyses L-methionyl-tRNA(fMet) + (6R)-10-formyltetrahydrofolate = N-formyl-L-methionyl-tRNA(fMet) + (6S)-5,6,7,8-tetrahydrofolate + H(+). Attaches a formyl group to the free amino group of methionyl-tRNA(fMet). The formyl group appears to play a dual role in the initiator identity of N-formylmethionyl-tRNA by promoting its recognition by IF2 and preventing the misappropriation of this tRNA by the elongation apparatus. The polypeptide is Methionyl-tRNA formyltransferase (Arthrobacter sp. (strain FB24)).